Here is a 293-residue protein sequence, read N- to C-terminus: Elongation factor Ts (293 aa).

The tract at residues 79–82 (TDFV) is involved in Mg(2+) ion dislocation from EF-Tu. A Phosphoserine modification is found at Ser-149.

Belongs to the EF-Ts family.

The protein localises to the cytoplasm. In terms of biological role, associates with the EF-Tu.GDP complex and induces the exchange of GDP to GTP. It remains bound to the aminoacyl-tRNA.EF-Tu.GTP complex up to the GTP hydrolysis stage on the ribosome. The polypeptide is Elongation factor Ts (tsf) (Bacillus subtilis (strain 168)).